Here is a 79-residue protein sequence, read N- to C-terminus: MQALRVSRALIRSFNTTARNRFQNRVPEKQKLFQEDNDIPLYLKGGIVDNILYRVTMGLCLGGSAYSMYCLGWASFPRN.

The N-terminal 21 residues, 1–21, are a transit peptide targeting the mitochondrion; it reads MQALRVSRALIRSFNTTARNR. Residues 22 to 46 lie on the Mitochondrial matrix side of the membrane; it reads FQNRVPEKQKLFQEDNDIPLYLKGG. Residues 47–75 form a helical membrane-spanning segment; that stretch reads IVDNILYRVTMGLCLGGSAYSMYCLGWAS. At 76-79 the chain is on the mitochondrial intermembrane side; sequence FPRN.

Belongs to the cytochrome c oxidase VIIa family. As to quaternary structure, component of the complex IV (CIV, cytochrome c oxidase), a multisubunit enzyme composed of 14 subunits. The complex is composed of a catalytic core of 3 subunits MT-CO1, MT-CO2 and MT-CO3, encoded in the mitochondrial DNA, and 11 supernumerary subunits COX4I1 (or COX4I2), COX5A, COX5B, COX6A2 (or COX6A1), COX6B1 (or COX6B2), COX6C, COX7A1 (or COX7A2), COX7B, COX7C, COX8B and NDUFA4, which are encoded in the nuclear genome. The complex exists as a monomer or a dimer and forms supercomplexes (SCs) in the inner mitochondrial membrane with NADH-ubiquinone oxidoreductase (complex I, CI) and ubiquinol-cytochrome c oxidoreductase (cytochrome b-c1 complex, complex III, CIII), resulting in different assemblies (supercomplex SCI(1)III(2)IV(1) and megacomplex MCI(2)III(2)IV(2)).

The protein resides in the mitochondrion inner membrane. It participates in energy metabolism; oxidative phosphorylation. In terms of biological role, component of the mitochondrial respiratory complex IV (CIV, also named cytochrome c oxidase complex), the last enzyme in the mitochondrial electron transport chain which drives oxidative phosphorylation. The CIV complex is the component of the respiratory chain that catalyzes the reduction of oxygen to water. Acts as an assembly factor that specifically drives the homodimerization of CIV complexes, mediating the formation of mitochondrial respiratory supercomplexes (respirasomes) containing two CIV: supercomplxes with two molecules of CIV show improved activity. Despite being highly expressed in brown adipose tissue, not required for thermogenesis. The protein is Cytochrome c oxidase subunit 7A1, mitochondrial (COX7A1) of Trachypithecus cristatus (Silvered leaf-monkey).